Reading from the N-terminus, the 30-residue chain is Kappa-sparatoxin-Hv1b (30 aa).

Disulfide bonds link Cys-3–Cys-17, Cys-10–Cys-22, and Cys-16–Cys-26. Tryptophan amide is present on Trp-30.

This sequence belongs to the neurotoxin 10 (Hwtx-1) family. 19 (HpTX2) subfamily. Expressed by the venom gland.

It localises to the secreted. Functionally, inhibitor of voltage-gated potassium channels of the Kv4/KCND family. Inhibition of Kv4.3/KCND3 and Kv4.2/KCND2 is strongly voltage-dependent, while inhibition of Kv4.1/KCND1 shows less voltage-dependence. Its binding site may be near the potassium channel voltage sensor. Also blocks calcium channels. This chain is Kappa-sparatoxin-Hv1b, found in Heteropoda venatoria (Brown huntsman spider).